A 152-amino-acid polypeptide reads, in one-letter code: SsrA-binding protein (152 aa).

It belongs to the SmpB family.

Its subcellular location is the cytoplasm. In terms of biological role, required for rescue of stalled ribosomes mediated by trans-translation. Binds to transfer-messenger RNA (tmRNA), required for stable association of tmRNA with ribosomes. tmRNA and SmpB together mimic tRNA shape, replacing the anticodon stem-loop with SmpB. tmRNA is encoded by the ssrA gene; the 2 termini fold to resemble tRNA(Ala) and it encodes a 'tag peptide', a short internal open reading frame. During trans-translation Ala-aminoacylated tmRNA acts like a tRNA, entering the A-site of stalled ribosomes, displacing the stalled mRNA. The ribosome then switches to translate the ORF on the tmRNA; the nascent peptide is terminated with the 'tag peptide' encoded by the tmRNA and targeted for degradation. The ribosome is freed to recommence translation, which seems to be the essential function of trans-translation. In Helicobacter pylori (strain HPAG1), this protein is SsrA-binding protein.